We begin with the raw amino-acid sequence, 311 residues long: MIELRDLSYSYPDGTPALRGINMKVERGERVAVIGPNGAGKSTLFLHLNGILKPAAGEVIIDGERVDYSKDELIKIRQKVGIVFQNPDDQLFSPTVREDVAFGPMNLGLPEDEVEERVAESLEKVGMSGYENRAPHHLSGGEKKRVAIAGILAMKPEIMVLDEPTTGLDPETADGIIRILLELSREGITVMISSHDVEIISQFAERVFVLNSGELIAEGTPLEIFRDAELIRRASLRLPRTADLLNRLRMAGFEVDVKLTVEETYHELLHLLGGDAYHRLLHFLGEEKQHRLIHLLGEKKYHELLHALKEQ.

Residues 2–237 form the ABC transporter domain; it reads IELRDLSYSY…AELIRRASLR (236 aa). Residue 35 to 42 participates in ATP binding; the sequence is GPNGAGKS.

This sequence belongs to the ABC transporter superfamily. Energy-coupling factor EcfA family. In terms of assembly, forms a stable energy-coupling factor (ECF) transporter complex composed of 2 membrane-embedded substrate-binding proteins (S component), 2 ATP-binding proteins (A component) and 2 transmembrane proteins (T component).

The protein localises to the cell membrane. ATP-binding (A) component of a common energy-coupling factor (ECF) ABC-transporter complex. Unlike classic ABC transporters this ECF transporter provides the energy necessary to transport a number of different substrates. The chain is Energy-coupling factor transporter ATP-binding protein EcfA from Methanothermobacter thermautotrophicus (strain ATCC 29096 / DSM 1053 / JCM 10044 / NBRC 100330 / Delta H) (Methanobacterium thermoautotrophicum).